A 188-amino-acid polypeptide reads, in one-letter code: FMN-dependent NADPH-azoreductase (188 aa).

It belongs to the azoreductase type 2 family. Homotetramer. Requires FMN as cofactor.

In terms of biological role, catalyzes the reductive cleavage of azo bond in aromatic azo compounds to the corresponding amines. Requires NADPH, but not NADH, as an electron donor for its activity. The chain is FMN-dependent NADPH-azoreductase (azo1) from Staphylococcus haemolyticus (strain JCSC1435).